We begin with the raw amino-acid sequence, 205 residues long: uncharacterized protein (205 aa).

The chain crosses the membrane as a helical span at residues 5-27 (IIVLFIIHFIMINENVFIALLHY).

It to T.maritima TM1570.

Its subcellular location is the membrane. This is an uncharacterized protein from Aquifex aeolicus (strain VF5).